The sequence spans 232 residues: 7-cyano-7-deazaguanine synthase (232 aa).

Position 8–18 (8–18) interacts with ATP; the sequence is FSGGQDSTTCL. Cys-189, Cys-198, Cys-201, and Cys-204 together coordinate Zn(2+).

Belongs to the QueC family. Zn(2+) is required as a cofactor.

It carries out the reaction 7-carboxy-7-deazaguanine + NH4(+) + ATP = 7-cyano-7-deazaguanine + ADP + phosphate + H2O + H(+). It functions in the pathway purine metabolism; 7-cyano-7-deazaguanine biosynthesis. Functionally, catalyzes the ATP-dependent conversion of 7-carboxy-7-deazaguanine (CDG) to 7-cyano-7-deazaguanine (preQ(0)). The chain is 7-cyano-7-deazaguanine synthase from Photorhabdus laumondii subsp. laumondii (strain DSM 15139 / CIP 105565 / TT01) (Photorhabdus luminescens subsp. laumondii).